Here is a 120-residue protein sequence, read N- to C-terminus: uncharacterized protein (120 aa).

The stretch at 45–78 (QLISESLKIAQKDLMEVRKELRKRKIAIRETERD) forms a coiled coil.

This is an uncharacterized protein from Bacillus subtilis (strain 168).